A 140-amino-acid chain; its full sequence is Putative pre-16S rRNA nuclease (140 aa).

It belongs to the YqgF nuclease family.

The protein resides in the cytoplasm. In terms of biological role, could be a nuclease involved in processing of the 5'-end of pre-16S rRNA. This is Putative pre-16S rRNA nuclease from Parabacteroides distasonis (strain ATCC 8503 / DSM 20701 / CIP 104284 / JCM 5825 / NCTC 11152).